The following is a 157-amino-acid chain: Ribosome maturation factor RimP (157 aa).

The protein belongs to the RimP family.

It is found in the cytoplasm. In terms of biological role, required for maturation of 30S ribosomal subunits. The sequence is that of Ribosome maturation factor RimP from Ligilactobacillus salivarius (strain UCC118) (Lactobacillus salivarius).